The primary structure comprises 250 residues: ATP synthase subunit a (250 aa).

The next 5 helical transmembrane spans lie at 27-47 (TDTVLSTAIAGLIVIALAFYL), 86-106 (FVLPLAVTIFVFILISNWLAV), 129-149 (INYVLALALFVFVCYHTAGIW), 191-211 (IFAGGILVALIALFPPYIMWA), and 219-239 (FDLFVGAIQAFIFALLTILYF).

The protein belongs to the ATPase A chain family. In terms of assembly, F-type ATPases have 2 components, CF(1) - the catalytic core - and CF(0) - the membrane proton channel. CF(1) has five subunits: alpha(3), beta(3), gamma(1), delta(1), epsilon(1). CF(0) has three main subunits: a(1), b(2) and c(9-12). The alpha and beta chains form an alternating ring which encloses part of the gamma chain. CF(1) is attached to CF(0) by a central stalk formed by the gamma and epsilon chains, while a peripheral stalk is formed by the delta and b chains.

It localises to the cell membrane. In terms of biological role, key component of the proton channel; it plays a direct role in the translocation of protons across the membrane. In Mycobacterium bovis (strain ATCC BAA-935 / AF2122/97), this protein is ATP synthase subunit a.